The chain runs to 119 residues: Toxin ICK-9 (119 aa).

Positions 1-19 (MMKLYSLVIIATLAAAAFA) are cleaved as a signal peptide. 4 disulfides stabilise this stretch: Cys-59/Cys-74, Cys-67/Cys-80, Cys-71/Cys-116, and Cys-73/Cys-87.

It belongs to the neurotoxin 25 family. ICK-8 subfamily. In terms of tissue distribution, expressed by the venom gland.

It localises to the secreted. In terms of biological role, ion channel inhibitor. The chain is Toxin ICK-9 from Trittame loki (Brush-footed trapdoor spider).